A 617-amino-acid chain; its full sequence is uncharacterized protein (617 aa).

Positions 387–396 (NGGMSATQLP) are enriched in polar residues. 2 disordered regions span residues 387-419 (NGGMSATQLPAPTRDSQRQAAANQFQQRTHAAP) and 443-599 (YDDF…NNEQ). A compositionally biased stretch (low complexity) spans 404–414 (RQAAANQFQQR). Over residues 453–474 (QPLTQQQKDAARQRYQSASPEQ) the composition is skewed to polar residues. Basic and acidic residues-rich tracts occupy residues 490–499 (QRREAARERI) and 522–531 (QRRDAARERI). Over residues 549 to 570 (RPLNQQQRDNARQRVQSASPEQ) the composition is skewed to polar residues. Residues 572–585 (QVFREKVQESRPQR) are compositionally biased toward basic and acidic residues. Residues 586-599 (LNDSNHTVRLNNEQ) show a composition bias toward polar residues.

This is an uncharacterized protein from Escherichia coli (strain K12).